The chain runs to 528 residues: Importin subunit alpha-7 (528 aa).

The region spanning 1–56 is the IBB domain; that stretch reads MKGGETMSVRRSGYKAVVDGVGGRRRREDDMVEIRKAKREESLLKKRREALPHSPS. 8 ARM repeats span residues 93 to 133, 136 to 175, 178 to 218, 220 to 259, 262 to 301, 304 to 344, 347 to 386, and 390 to 429; these read NVRV…NIAS, SENT…NISG, PRCR…NLCR, KPQP…YLSD, NEKI…NIVT, DSQT…NITA, QSQI…NAIA, and YKQI…KILK.

Belongs to the importin alpha family. In terms of assembly, forms a complex with importin subunit beta-1.

Its subcellular location is the nucleus envelope. Its function is as follows. Binds to conventional NLS motifs and mediates nuclear protein import across the nuclear envelope. Acts as a cellular receptor for the nuclear import of the virD2 protein of Agrobacterium, but is not essential for Agrobacterium-mediated root transformation. The protein is Importin subunit alpha-7 of Arabidopsis thaliana (Mouse-ear cress).